Reading from the N-terminus, the 453-residue chain is 3-phosphoshikimate 1-carboxyvinyltransferase (453 aa).

A disordered region spans residues 1 to 27 (MSHDSEPQPVTATPGGPLNGSLKPPGD). 3-phosphoshikimate is bound by residues Lys-28, Ser-29, and Arg-33. Residue Lys-28 coordinates phosphoenolpyruvate. Phosphoenolpyruvate-binding residues include Gly-101 and Arg-129. Ser-175, Gln-177, Asp-330, and Lys-357 together coordinate 3-phosphoshikimate. Gln-177 is a phosphoenolpyruvate binding site. Residue Asp-330 is the Proton acceptor of the active site. Arg-361 and Arg-405 together coordinate phosphoenolpyruvate.

Belongs to the EPSP synthase family. As to quaternary structure, monomer.

It localises to the cytoplasm. It carries out the reaction 3-phosphoshikimate + phosphoenolpyruvate = 5-O-(1-carboxyvinyl)-3-phosphoshikimate + phosphate. Its pathway is metabolic intermediate biosynthesis; chorismate biosynthesis; chorismate from D-erythrose 4-phosphate and phosphoenolpyruvate: step 6/7. In terms of biological role, catalyzes the transfer of the enolpyruvyl moiety of phosphoenolpyruvate (PEP) to the 5-hydroxyl of shikimate-3-phosphate (S3P) to produce enolpyruvyl shikimate-3-phosphate and inorganic phosphate. The protein is 3-phosphoshikimate 1-carboxyvinyltransferase of Methylorubrum extorquens (strain CM4 / NCIMB 13688) (Methylobacterium extorquens).